The primary structure comprises 294 residues: Ribosomal protein L11 methyltransferase (294 aa).

The S-adenosyl-L-methionine site is built by T145, G167, D189, and N230.

Belongs to the methyltransferase superfamily. PrmA family.

The protein resides in the cytoplasm. The enzyme catalyses L-lysyl-[protein] + 3 S-adenosyl-L-methionine = N(6),N(6),N(6)-trimethyl-L-lysyl-[protein] + 3 S-adenosyl-L-homocysteine + 3 H(+). Its function is as follows. Methylates ribosomal protein L11. The protein is Ribosomal protein L11 methyltransferase of Alkalilimnicola ehrlichii (strain ATCC BAA-1101 / DSM 17681 / MLHE-1).